Reading from the N-terminus, the 454-residue chain is Pup--protein ligase (454 aa).

E9 is a binding site for Mg(2+). Position 53 (R53) interacts with ATP. Y55 provides a ligand contact to Mg(2+). D57 serves as the catalytic Proton acceptor. E63 contributes to the Mg(2+) binding site. Residues T66 and W420 each coordinate ATP.

The protein belongs to the Pup ligase/Pup deamidase family. Pup-conjugating enzyme subfamily.

It catalyses the reaction ATP + [prokaryotic ubiquitin-like protein]-L-glutamate + [protein]-L-lysine = ADP + phosphate + N(6)-([prokaryotic ubiquitin-like protein]-gamma-L-glutamyl)-[protein]-L-lysine.. It participates in protein degradation; proteasomal Pup-dependent pathway. The protein operates within protein modification; protein pupylation. In terms of biological role, catalyzes the covalent attachment of the prokaryotic ubiquitin-like protein modifier Pup to the proteasomal substrate proteins, thereby targeting them for proteasomal degradation. This tagging system is termed pupylation. The ligation reaction involves the side-chain carboxylate of the C-terminal glutamate of Pup and the side-chain amino group of a substrate lysine. The polypeptide is Pup--protein ligase (Pseudarthrobacter chlorophenolicus (strain ATCC 700700 / DSM 12829 / CIP 107037 / JCM 12360 / KCTC 9906 / NCIMB 13794 / A6) (Arthrobacter chlorophenolicus)).